A 336-amino-acid polypeptide reads, in one-letter code: Holliday junction branch migration complex subunit RuvB (336 aa).

Positions 2–186 (QDQEEERMIT…FGVICKLELY (185 aa)) are large ATPase domain (RuvB-L). Residues L25, R26, G67, K70, T71, T72, 133 to 135 (EDF), R176, Y186, and R223 contribute to the ATP site. T71 is a Mg(2+) binding site. The small ATPAse domain (RuvB-S) stretch occupies residues 187 to 257 (NNKQLTAIVK…VAEEALILLE (71 aa)). Residues 260–336 (SLGLDNTDKK…YEHFNIPSAE (77 aa)) are head domain (RuvB-H). DNA is bound by residues R296, R315, and R320.

This sequence belongs to the RuvB family. In terms of assembly, homohexamer. Forms an RuvA(8)-RuvB(12)-Holliday junction (HJ) complex. HJ DNA is sandwiched between 2 RuvA tetramers; dsDNA enters through RuvA and exits via RuvB. An RuvB hexamer assembles on each DNA strand where it exits the tetramer. Each RuvB hexamer is contacted by two RuvA subunits (via domain III) on 2 adjacent RuvB subunits; this complex drives branch migration. In the full resolvosome a probable DNA-RuvA(4)-RuvB(12)-RuvC(2) complex forms which resolves the HJ.

The protein localises to the cytoplasm. The enzyme catalyses ATP + H2O = ADP + phosphate + H(+). The RuvA-RuvB-RuvC complex processes Holliday junction (HJ) DNA during genetic recombination and DNA repair, while the RuvA-RuvB complex plays an important role in the rescue of blocked DNA replication forks via replication fork reversal (RFR). RuvA specifically binds to HJ cruciform DNA, conferring on it an open structure. The RuvB hexamer acts as an ATP-dependent pump, pulling dsDNA into and through the RuvAB complex. RuvB forms 2 homohexamers on either side of HJ DNA bound by 1 or 2 RuvA tetramers; 4 subunits per hexamer contact DNA at a time. Coordinated motions by a converter formed by DNA-disengaged RuvB subunits stimulates ATP hydrolysis and nucleotide exchange. Immobilization of the converter enables RuvB to convert the ATP-contained energy into a lever motion, pulling 2 nucleotides of DNA out of the RuvA tetramer per ATP hydrolyzed, thus driving DNA branch migration. The RuvB motors rotate together with the DNA substrate, which together with the progressing nucleotide cycle form the mechanistic basis for DNA recombination by continuous HJ branch migration. Branch migration allows RuvC to scan DNA until it finds its consensus sequence, where it cleaves and resolves cruciform DNA. This is Holliday junction branch migration complex subunit RuvB from Alkaliphilus metalliredigens (strain QYMF).